A 215-amino-acid polypeptide reads, in one-letter code: Probable nicotinate-nucleotide adenylyltransferase (215 aa).

Belongs to the NadD family.

It carries out the reaction nicotinate beta-D-ribonucleotide + ATP + H(+) = deamido-NAD(+) + diphosphate. Its pathway is cofactor biosynthesis; NAD(+) biosynthesis; deamido-NAD(+) from nicotinate D-ribonucleotide: step 1/1. Catalyzes the reversible adenylation of nicotinate mononucleotide (NaMN) to nicotinic acid adenine dinucleotide (NaAD). The sequence is that of Probable nicotinate-nucleotide adenylyltransferase from Shewanella sp. (strain W3-18-1).